The chain runs to 130 residues: Large ribosomal subunit protein bL17 (130 aa).

This sequence belongs to the bacterial ribosomal protein bL17 family. In terms of assembly, part of the 50S ribosomal subunit. Contacts protein L32.

This is Large ribosomal subunit protein bL17 from Photorhabdus laumondii subsp. laumondii (strain DSM 15139 / CIP 105565 / TT01) (Photorhabdus luminescens subsp. laumondii).